Here is an 81-residue protein sequence, read N- to C-terminus: Metallocarboxypeptidase inhibitor (81 aa).

An N-terminal signal peptide occupies residues 1-15 (MFLLVFLCCLHLVIS). Disulfide bonds link cysteine 25–cysteine 48, cysteine 32–cysteine 76, cysteine 33–cysteine 57, and cysteine 36–cysteine 72.

Tightly binding, competitive inhibitor of different types of pancreatic-like carboxypeptidases. Inhibits human CPA4. The polypeptide is Metallocarboxypeptidase inhibitor (Hirudo medicinalis (Medicinal leech)).